We begin with the raw amino-acid sequence, 722 residues long: Dynein axonemal intermediate chain 7 (722 aa).

Over residues 1 to 15 (MGPKAKKSGSKKKKV) the composition is skewed to basic residues. A disordered region spans residues 1–20 (MGPKAKKSGSKKKKVTKAER).

Belongs to the DNAI7 family. Part of the multisubunit axonemal dynein complex formed at least of two heavy chains and a number of intermediate and light chains. Associates with tubulin. Interacts with microtubule. Ubiquitinated. Ubiquitination leads to its degradation through the 26S proteasome. Ubiquitin-proteasome-mediated DNAI7 degradation occurs in mitosis.

It is found in the cell projection. The protein resides in the cilium. It localises to the cytoplasm. Via its association with the multisubunit axonemal dynein complex, is potentially involved in the regulation of cilia function. May act as a cell cycle regulator. The sequence is that of Dynein axonemal intermediate chain 7 from Macaca fascicularis (Crab-eating macaque).